A 222-amino-acid chain; its full sequence is tRNA (guanine-N(1)-)-methyltransferase (222 aa).

Residues glycine 111 and 131-136 contribute to the S-adenosyl-L-methionine site; that span reads LGNYVI.

Belongs to the RNA methyltransferase TrmD family. Homodimer.

Its subcellular location is the cytoplasm. The catalysed reaction is guanosine(37) in tRNA + S-adenosyl-L-methionine = N(1)-methylguanosine(37) in tRNA + S-adenosyl-L-homocysteine + H(+). Its function is as follows. Specifically methylates guanosine-37 in various tRNAs. This Leptospira borgpetersenii serovar Hardjo-bovis (strain JB197) protein is tRNA (guanine-N(1)-)-methyltransferase.